A 218-amino-acid polypeptide reads, in one-letter code: Adenylate kinase (218 aa).

10–15 is an ATP binding site; it reads GAGKGT. The interval 30–59 is NMP; it reads STGDMLRAAVKAGTPLGQQAKAVMDAGKLV. Residues Thr31, Arg36, 57–59, 85–88, and Gln92 contribute to the AMP site; these read KLV and GFPR. Positions 122–159 are LID; it reads GRRSHPASGRTYHVKFNPPKVEGKDDVTGEDLIQREDD. ATP-binding positions include Arg123 and 132–133; that span reads TY. The tract at residues 127 to 147 is disordered; sequence PASGRTYHVKFNPPKVEGKDD. AMP is bound by residues Arg156 and Arg167. Residue Gly203 participates in ATP binding.

It belongs to the adenylate kinase family. As to quaternary structure, monomer.

Its subcellular location is the cytoplasm. It carries out the reaction AMP + ATP = 2 ADP. The protein operates within purine metabolism; AMP biosynthesis via salvage pathway; AMP from ADP: step 1/1. In terms of biological role, catalyzes the reversible transfer of the terminal phosphate group between ATP and AMP. Plays an important role in cellular energy homeostasis and in adenine nucleotide metabolism. This is Adenylate kinase from Paracidovorax citrulli (strain AAC00-1) (Acidovorax citrulli).